We begin with the raw amino-acid sequence, 258 residues long: Imidazole glycerol phosphate synthase subunit HisF (258 aa).

Residues Asp11 and Asp130 contribute to the active site.

It belongs to the HisA/HisF family. As to quaternary structure, heterodimer of HisH and HisF.

It is found in the cytoplasm. It carries out the reaction 5-[(5-phospho-1-deoxy-D-ribulos-1-ylimino)methylamino]-1-(5-phospho-beta-D-ribosyl)imidazole-4-carboxamide + L-glutamine = D-erythro-1-(imidazol-4-yl)glycerol 3-phosphate + 5-amino-1-(5-phospho-beta-D-ribosyl)imidazole-4-carboxamide + L-glutamate + H(+). The protein operates within amino-acid biosynthesis; L-histidine biosynthesis; L-histidine from 5-phospho-alpha-D-ribose 1-diphosphate: step 5/9. In terms of biological role, IGPS catalyzes the conversion of PRFAR and glutamine to IGP, AICAR and glutamate. The HisF subunit catalyzes the cyclization activity that produces IGP and AICAR from PRFAR using the ammonia provided by the HisH subunit. The polypeptide is Imidazole glycerol phosphate synthase subunit HisF (Methylorubrum extorquens (strain PA1) (Methylobacterium extorquens)).